Here is a 549-residue protein sequence, read N- to C-terminus: Probable protein kinase UbiB (549 aa).

The Protein kinase domain occupies 123-501; sequence DFDETPLASA…QQQAHKSNYL (379 aa). ATP is bound by residues 129-137 and Lys152; that span reads LASASISQV. The Proton acceptor role is filled by Asp287. Transmembrane regions (helical) follow at residues 498–518 and 520–540; these read SNYL…LFNQ and ATLW…IIGW.

The protein belongs to the ABC1 family. UbiB subfamily.

The protein resides in the cell inner membrane. It participates in cofactor biosynthesis; ubiquinone biosynthesis [regulation]. Its function is as follows. Is probably a protein kinase regulator of UbiI activity which is involved in aerobic coenzyme Q (ubiquinone) biosynthesis. The protein is Probable protein kinase UbiB of Shewanella sp. (strain ANA-3).